Consider the following 155-residue polypeptide: Ribosome maturation factor RimP (155 aa).

This sequence belongs to the RimP family.

The protein localises to the cytoplasm. Its function is as follows. Required for maturation of 30S ribosomal subunits. The chain is Ribosome maturation factor RimP from Listeria monocytogenes serotype 4a (strain HCC23).